The sequence spans 248 residues: Flavodoxin/ferredoxin--NADP reductase (248 aa).

The FAD-binding FR-type domain occupies Ala2–Asp101. An NADP(+)-binding site is contributed by Asp17. FAD-binding positions include Arg50–Ser53, Tyr66, Lys74–Ser76, and Thr116. Residues Ala143 to Arg144, Ser173 to Arg174, Arg184, Asn214 to Gln216, and Asp220 contribute to the NADP(+) site. An FAD-binding site is contributed by Tyr247–Trp248.

The protein belongs to the ferredoxin--NADP reductase type 1 family. Monomer. Requires FAD as cofactor.

The protein resides in the cytoplasm. The catalysed reaction is 2 reduced [2Fe-2S]-[ferredoxin] + NADP(+) + H(+) = 2 oxidized [2Fe-2S]-[ferredoxin] + NADPH. It carries out the reaction reduced [flavodoxin] + NADP(+) = oxidized [flavodoxin] + NADPH + 2 H(+). Functionally, transports electrons between flavodoxin or ferredoxin and NADPH. Reduces flavodoxin 1, flavodoxin 2 and ferredoxin, ferredoxin being the kinetically and thermodynamically preferred partner. Required for the activation of several enzymes such as pyruvate formate-lyase, anaerobic ribonucleotide reductase and cobalamin-dependent methionine synthase. The sequence is that of Flavodoxin/ferredoxin--NADP reductase from Escherichia coli (strain K12).